A 352-amino-acid chain; its full sequence is Guanine nucleotide-binding protein alpha-7 subunit (352 aa).

Residue Gly-2 is the site of N-myristoyl glycine attachment. Cys-4 carries the S-palmitoyl cysteine lipid modification. One can recognise a G-alpha domain in the interval 32 to 352 (RIIKLLLLGA…AKNLKSMGLC (321 aa)). The tract at residues 35-48 (KLLLLGAGESGKST) is G1 motif. GTP-binding positions include 40 to 47 (GAGESGKS), 174 to 180 (LRTRIKT), 199 to 203 (DVGGQ), 268 to 271 (NKKD), and Ala-324. Positions 47 and 180 each coordinate Mg(2+). A G2 motif region spans residues 172-180 (DLLRTRIKT). The interval 195–204 (FRVIDVGGQR) is G3 motif. The interval 264–271 (ILFLNKKD) is G4 motif. Residues 322–327 (TCATDT) form a G5 motif region.

It belongs to the G-alpha family. G(i/o/t/z) subfamily. In terms of assembly, g proteins are composed of 3 units; alpha, beta and gamma. The alpha chain contains the guanine nucleotide binding site.

In terms of biological role, guanine nucleotide-binding proteins (G proteins) are involved as modulators or transducers in various transmembrane signaling systems. The protein is Guanine nucleotide-binding protein alpha-7 subunit (gpa-7) of Caenorhabditis elegans.